The sequence spans 547 residues: Regulator of G-protein signaling 14 (547 aa).

The tract at residues 19-59 (VSDGELTSTAGSQAQGEGRGSSLSIHSLPSGPSSPFSTEEQ) is disordered. Residues S20, S42, S45, S143, S199, S203, and S218 each carry the phosphoserine modification. Residues 23 to 58 (ELTSTAGSQAQGEGRGSSLSIHSLPSGPSSPFSTEE) show a composition bias toward polar residues. The RGS domain occupies 67–184 (SFERLLQDPR…VKSPLYQECL (118 aa)). Residues 191 to 220 (RPLREPGSSHLGSPDTARKKPKLKPGKSLP) form a disordered region. T249 carries the post-translational modification Phosphothreonine. Residue S289 is modified to Phosphoserine. The tract at residues 300 to 427 (RPGKYCCVYL…LHRPGEKQPM (128 aa)) is necessary for interaction with RABGEF1. RBD domains are found at residues 303–374 (KYCC…LENR) and 376–446 (TFQL…LDTP). Positions 447–496 (PDAKMSEARSISPCRSQGCLPRTQTKDSHLPPSSSSLLVEDASSSTGNRQ) are disordered. Low complexity predominate over residues 476-491 (LPPSSSSLLVEDASSS). One can recognise a GoLoco domain in the interval 500–522 (IEGLVELLNRVQSSGAHDQRGLL).

As to quaternary structure, interacts with GNAI1 and GNAI2. Interacts with GNAI3. Interacts with GNAO1. Interacts (via RGS and GoLoco domains) with GNAI1; the interaction occurs in the centrosomes. Interaction with GNAI1 or GNAI3 (via active GTP- or inactive GDP-bound forms) prevents association of RGS14 with centrosomes or nuclear localization. Interacts with RABGEF1; the interactions is GTP-dependent. Interacts with RAP2A; the interactions is GTP-dependent and does not alter its function on G(i) alpha subunits either as GAP or as GDI. Associates with microtubules. Found in a complex with at least BRAF, HRAS, MAP2K1, MAPK3 and RGS14. Interacts with RIC8A (via C-terminus). Interacts (via RBD 1 domain) with HRAS (active GTP-bound form preferentially). Interacts (via RBD domains) with BRAF (via N-terminus); the interaction mediates the formation of a ternary complex with RAF1. Interacts (via RBD domains) with RAF1 (via N-terminus); the interaction mediates the formation of a ternary complex with BRAF. Interacts with KRAS (active GTP-bound form preferentially), MRAS (active GTP-bound form preferentially), NRAS (active GTP-bound form preferentially) and RRAS (active GTP-bound form preferentially). Phosphorylated by PKC. Phosphorylation is increased in presence of forskolin and may enhance the GDI activity on G(i) alpha subunit GNAI1. Expressed in pyramidal neurons of the CA1, CA2 and fasciola cinerea (FC) subregions of the hippocampus and in the olfactory cortex (at protein level). Expressed in brain, spleen, heart, liver, lung, kidney, skin and thymus (at protein level). Expressed in granular layer of the cerebellum, forbrain, striatum, layer V of the cortex, olfactory cortex, tubercules, subthalamic and hippocampus, particularly in the CA2 region, to a lesser extent in the CA1 region and the external layer of the dentate gyrus. Expressed in neurons.

Its subcellular location is the nucleus. It is found in the PML body. The protein localises to the cytoplasm. The protein resides in the membrane. It localises to the cell membrane. Its subcellular location is the cytoskeleton. It is found in the spindle. The protein localises to the spindle pole. The protein resides in the microtubule organizing center. It localises to the centrosome. Its subcellular location is the cell projection. It is found in the dendrite. The protein localises to the dendritic spine. The protein resides in the postsynaptic density. Regulates G protein-coupled receptor signaling cascades. Inhibits signal transduction by increasing the GTPase activity of G protein alpha subunits, thereby driving them into their inactive GDP-bound form. Besides, modulates signal transduction via G protein alpha subunits by functioning as a GDP-dissociation inhibitor (GDI). Has GDI activity on G(i) alpha subunits GNAI1 and GNAI3, but not on GNAI2 and G(o)-alpha subunit GNAO1. Has GAP activity on GNAI0, GNAI2 and GNAI3. May act as a scaffold integrating G protein and Ras/Raf MAPkinase signaling pathways. Inhibits platelet-derived growth factor (PDGF)-stimulated ERK1/ERK2 phosphorylation; a process depending on its interaction with HRAS and that is reversed by G(i) alpha subunit GNAI1. Acts as a positive modulator of microtubule polymerisation and spindle organization through a G(i)-alpha-dependent mechanism. Plays a role in cell division; required for completion of the first mitotic division of the embryo. Involved in visual memory processing capacity; when overexpressed in the V2 secondary visual cortex area. Involved in hippocampal-based learning and memory; acts as a suppressor of synaptic plasticity in CA2 neurons. Required for the nerve growth factor (NGF)-mediated neurite outgrowth. Involved in stress resistance. The protein is Regulator of G-protein signaling 14 (Rgs14) of Mus musculus (Mouse).